A 550-amino-acid chain; its full sequence is 2-succinyl-5-enolpyruvyl-6-hydroxy-3-cyclohexene-1-carboxylate synthase (550 aa).

It belongs to the TPP enzyme family. MenD subfamily. As to quaternary structure, homodimer. Requires Mg(2+) as cofactor. Mn(2+) is required as a cofactor. Thiamine diphosphate serves as cofactor.

The catalysed reaction is isochorismate + 2-oxoglutarate + H(+) = 5-enolpyruvoyl-6-hydroxy-2-succinyl-cyclohex-3-ene-1-carboxylate + CO2. The protein operates within quinol/quinone metabolism; 1,4-dihydroxy-2-naphthoate biosynthesis; 1,4-dihydroxy-2-naphthoate from chorismate: step 2/7. Its pathway is quinol/quinone metabolism; menaquinone biosynthesis. Its function is as follows. Catalyzes the thiamine diphosphate-dependent decarboxylation of 2-oxoglutarate and the subsequent addition of the resulting succinic semialdehyde-thiamine pyrophosphate anion to isochorismate to yield 2-succinyl-5-enolpyruvyl-6-hydroxy-3-cyclohexene-1-carboxylate (SEPHCHC). This chain is 2-succinyl-5-enolpyruvyl-6-hydroxy-3-cyclohexene-1-carboxylate synthase, found in Flavobacterium psychrophilum (strain ATCC 49511 / DSM 21280 / CIP 103535 / JIP02/86).